The sequence spans 389 residues: MKKLLKSALLSAAFAGSVGSLQALPVGNPSDPSLLIDGTIWEGAAGDPCDPCATWCDAISLRAGFYGDYVFDRILKVDAPKTFSMGAKPTGSATANYTTAVDRPNPAYNKHLHDAEWFTNAGFIALNIWDRFDVFCTLGASNGYIKGNSTAFNLVGLFGVKGTSVAANELPNVSLSNGVVELYTDTSFSWSVGARGALWECGCATLGAEFQYAQSKPKVEELNVICNVAQFSVNKPKGYKGVAFPLPTDAGVATATGTKSATINYHEWQVGASLSYRLNSLVPYIGVQWSRATFDADNIRIAQPKLPTAVLNLTAWNPSLLGNTTTLATSDSFSDFMQIVSCQINKFKSRKACGVTVGATLVDADKWSLTAEARLINERAAHVSGQFRF.

Belongs to the chlamydial porin (CP) (TC 1.B.2) family. Part of a disulfide cross-linked outer membrane complex (COMC) composed of the major outer membrane porin (MOMP), the small cysteine-rich protein (OmcA) and the large cysteine-rich periplasmic protein (OmcB).

Its subcellular location is the cell outer membrane. Functionally, in elementary bodies (EBs, the infectious stage, which is able to survive outside the host cell) provides the structural integrity of the outer envelope through disulfide cross-links with the small cysteine-rich protein and the large cysteine-rich periplasmic protein. It has been described in publications as the Sarkosyl-insoluble COMC (Chlamydia outer membrane complex), and serves as the functional equivalent of peptidoglycan. Permits diffusion of specific solutes through the outer membrane. This Chlamydia pneumoniae (Chlamydophila pneumoniae) protein is Major outer membrane porin (ompA).